We begin with the raw amino-acid sequence, 1233 residues long: Hemocyanin A-type, units Ode to Odg (1233 aa).

The segment at 1–4 (EGNE) is ODD. Positions 5–422 (YLVRKNVERL…KQDADIDIPL (418 aa)) are ODE. Histidine 45 contributes to the Cu cation binding site. Cysteine 51 and cysteine 62 are oxidised to a cystine. A cross-link (2'-(S-cysteinyl)-histidine (Cys-His)) is located at residues 63–65 (CLH). Residues histidine 65, histidine 74, histidine 186, histidine 190, and histidine 217 each coordinate Cu cation. 2 disulfides stabilise this stretch: cysteine 176/cysteine 243 and cysteine 334/cysteine 340. The N-linked (GlcNAc...) asparagine glycan is linked to asparagine 392. Residues 423–839 (NHIRRNVESL…KEIEKEAVRG (417 aa)) form an ODF region. Position 463 (histidine 463) interacts with Cu cation. The cysteines at positions 468 and 478 are disulfide-linked. A cross-link (2'-(S-cysteinyl)-histidine (Cys-His)) is located at residues 479–481 (CLH). Histidine 481 and histidine 490 together coordinate Cu cation. Asparagine 538 is a glycosylation site (N-linked (GlcNAc...) asparagine). 2 disulfides stabilise this stretch: cysteine 589-cysteine 656 and cysteine 743-cysteine 748. Histidine 599, histidine 603, and histidine 630 together coordinate Cu cation. An ODG region spans residues 840-1233 (TIIRKNVNSL…VFLAPAKTTH (394 aa)). Histidine 880 lines the Cu cation pocket. A disulfide bridge connects residues cysteine 886 and cysteine 896. Residue asparagine 890 is glycosylated (N-linked (GlcNAc...) asparagine). The 2'-(S-cysteinyl)-histidine (Cys-His) cross-link spans 897 to 899 (CQH). Cu cation is bound by residues histidine 899, histidine 908, histidine 1008, histidine 1012, and histidine 1039. 2 disulfide bridges follow: cysteine 998–cysteine 1065 and cysteine 1152–cysteine 1158.

Belongs to the tyrosinase family. Hemocyanin subfamily. As to quaternary structure, decamers of large identical subunits (350 kDa), each containing 7 globular oxygen-binding domains: ODA, ODB, ODC, ODD, ODE, ODF, and ODG. Requires Cu(2+) as cofactor.

Hemocyanins are copper-containing oxygen carriers occurring freely dissolved in the hemolymph of many mollusks and arthropods. The protein is Hemocyanin A-type, units Ode to Odg of Enteroctopus dofleini (North Pacific giant octopus).